The chain runs to 217 residues: Secreted RxLR effector protein 147 (217 aa).

A signal peptide spans 1–23 (MRGAFYVTTALLITNSIRTAAEA). A disordered region spans residues 22 to 52 (EANPPGRQPMSHHDGVVPGKSSPRRFLQGSH). Residues 46 to 67 (RFLQGSHEPHDKFAVSAANEER) carry the RxLR-dEER motif.

Belongs to the RxLR effector family.

It localises to the secreted. Its subcellular location is the host nucleus. It is found in the host cytoplasm. In terms of biological role, secreted effector that completely suppresses the host cell death induced by cell death-inducing proteins. This Plasmopara viticola (Downy mildew of grapevine) protein is Secreted RxLR effector protein 147.